A 145-amino-acid polypeptide reads, in one-letter code: Angiogenin-3 (145 aa).

A signal peptide spans 1–24 (MVMSPGSLLLVFLLSLDVIPPTLA). Gln25 carries the post-translational modification Pyrrolidone carboxylic acid. Residue His37 is the Proton acceptor of the active site. 3 disulfide bridges follow: Cys50/Cys104, Cys63/Cys115, and Cys81/Cys130. Residues 55–59 (KKRKL) carry the Nucleolar localization signal motif. Zn(2+) contacts are provided by Glu65 and His106. His137 functions as the Proton donor in the catalytic mechanism.

Belongs to the pancreatic ribonuclease family.

The protein resides in the cytoplasmic vesicle. It localises to the secretory vesicle lumen. Its subcellular location is the secreted. It is found in the nucleus. The protein localises to the nucleolus. With respect to regulation, divalent metal ions, such as Cu2+ and Zn2+, may inhibit the ribonucleolytic activity. Functionally, has low ribonuclease activity (in vitro). This chain is Angiogenin-3 (Ang3), found in Mus musculus (Mouse).